The primary structure comprises 131 residues: Glycine cleavage system H protein (131 aa).

The Lipoyl-binding domain occupies 24-106 (IATIGISAFA…YGEGWLLKLR (83 aa)). Residue lysine 65 is modified to N6-lipoyllysine.

The protein belongs to the GcvH family. As to quaternary structure, the glycine cleavage system is composed of four proteins: P, T, L and H. (R)-lipoate is required as a cofactor.

Functionally, the glycine cleavage system catalyzes the degradation of glycine. The H protein shuttles the methylamine group of glycine from the P protein to the T protein. This is Glycine cleavage system H protein from Gloeothece citriformis (strain PCC 7424) (Cyanothece sp. (strain PCC 7424)).